Reading from the N-terminus, the 226-residue chain is tRNA (guanine-N(7)-)-methyltransferase (226 aa).

Residues glutamate 57, glutamate 82, aspartate 109, and aspartate 132 each contribute to the S-adenosyl-L-methionine site. Aspartate 132 is a catalytic residue. Residues lysine 136, aspartate 168, and 205–208 each bind substrate; that span reads TKFE.

The protein belongs to the class I-like SAM-binding methyltransferase superfamily. TrmB family.

The catalysed reaction is guanosine(46) in tRNA + S-adenosyl-L-methionine = N(7)-methylguanosine(46) in tRNA + S-adenosyl-L-homocysteine. Its pathway is tRNA modification; N(7)-methylguanine-tRNA biosynthesis. In terms of biological role, catalyzes the formation of N(7)-methylguanine at position 46 (m7G46) in tRNA. In Legionella pneumophila subsp. pneumophila (strain Philadelphia 1 / ATCC 33152 / DSM 7513), this protein is tRNA (guanine-N(7)-)-methyltransferase.